We begin with the raw amino-acid sequence, 2282 residues long: Acetyl-CoA carboxylase (2282 aa).

Residues 16–515 form the Biotin carboxylation domain; that stretch reads NIEKILIANN…HTGWLDQLIS (500 aa). Residues 170-360 enclose the ATP-grasp domain; it reads YSECNGVPSE…LPATQLQIAM (191 aa). ATP is bound at residue 196 to 253; that stretch reads AQRVGFPAMIKASEGGGGKGIRKVTSMEDLESSFRQVQNEVPGSPIFFMKLVSNARHL. Mn(2+) is bound by residues glutamate 319, glutamate 331, and asparagine 333. Arginine 335 is a catalytic residue. A Biotinyl-binding domain is found at 646-720; the sequence is FSQEYDPSIL…APGAIIANLE (75 aa). The residue at position 687 (lysine 687) is an N6-biotinyllysine. Residues 1109-1129 are compositionally biased toward low complexity; sequence GSNSGSPTYGSPLIRSISSSG. Residues 1109–1141 form a disordered region; sequence GSNSGSPTYGSPLIRSISSSGGSSGGSGFQISP. One can recognise a CoA carboxyltransferase N-terminal domain in the interval 1495–1851; sequence PYPIMDAVQR…SGGEMVPIIS (357 aa). The tract at residues 1495–2178 is carboxyltransferase; it reads PYPIMDAVQR…EEDKLKLIDK (684 aa). CoA is bound by residues arginine 1761, lysine 2068, and arginine 2070. In terms of domain architecture, CoA carboxyltransferase C-terminal spans 1852-2178; it reads PIDSPHRDIE…EEDKLKLIDK (327 aa).

The cofactor is biotin. It depends on Mn(2+) as a cofactor.

It is found in the cytoplasm. The enzyme catalyses hydrogencarbonate + acetyl-CoA + ATP = malonyl-CoA + ADP + phosphate + H(+). The catalysed reaction is N(6)-biotinyl-L-lysyl-[protein] + hydrogencarbonate + ATP = N(6)-carboxybiotinyl-L-lysyl-[protein] + ADP + phosphate + H(+). Its pathway is lipid metabolism; malonyl-CoA biosynthesis; malonyl-CoA from acetyl-CoA: step 1/1. In terms of biological role, catalyzes the rate-limiting reaction in the biogenesis of long-chain fatty acids. Carries out three functions: biotin carboxyl carrier protein, biotin carboxylase and carboxyltransferase. The chain is Acetyl-CoA carboxylase (accA) from Dictyostelium discoideum (Social amoeba).